The primary structure comprises 637 residues: Threonine--tRNA ligase (637 aa).

The TGS domain maps to 1–65 (MIAIQLPDGS…EADEALSIIT (65 aa)). The tract at residues 246–537 (DHRKLGRELD…LIEEHAGALP (292 aa)) is catalytic. Residues Cys337, His388, and His514 each coordinate Zn(2+).

It belongs to the class-II aminoacyl-tRNA synthetase family. As to quaternary structure, homodimer. Requires Zn(2+) as cofactor.

It localises to the cytoplasm. It catalyses the reaction tRNA(Thr) + L-threonine + ATP = L-threonyl-tRNA(Thr) + AMP + diphosphate + H(+). Functionally, catalyzes the attachment of threonine to tRNA(Thr) in a two-step reaction: L-threonine is first activated by ATP to form Thr-AMP and then transferred to the acceptor end of tRNA(Thr). Also edits incorrectly charged L-seryl-tRNA(Thr). The sequence is that of Threonine--tRNA ligase from Leptothrix cholodnii (strain ATCC 51168 / LMG 8142 / SP-6) (Leptothrix discophora (strain SP-6)).